The chain runs to 337 residues: MGRPRVLSGVQPTGALHLGNWLGAIRNWVDLQDTHDTFVCVVDLHAITVPHDPARLADDTLNTAALYLACGMDPQRCSIFIQSQVAAHSELCWLLNCVTPLNWLERMIQFKEKAVKQGDNVSVGLLDYPVLMAADILLYDADLVPVGEDQKQHLELARDIAQQRINARFGSEERPVLKVPKPLILKEGARVMSLTDGRSKMSKSDPNEGSRITLLDPPELITKKIKRAKTDPKRGLEFSNPDRPETDNLLGLYAILSGKGREAAADECADMGWGQFKPLLADAAVAALEPIQARHKELMADRVELDRVLAKGRDQAESVANASLERVRDALGFAKCS.

Residues 11–13 (QPT) and 19–20 (GN) contribute to the ATP site. The short motif at 12-20 (PTGALHLGN) is the 'HIGH' region element. Aspartate 135 is a binding site for L-tryptophan. Residues 147-149 (GED), valine 191, and 200-204 (KMSKS) contribute to the ATP site. The 'KMSKS' region signature appears at 200-204 (KMSKS).

It belongs to the class-I aminoacyl-tRNA synthetase family. Homodimer.

It localises to the cytoplasm. It carries out the reaction tRNA(Trp) + L-tryptophan + ATP = L-tryptophyl-tRNA(Trp) + AMP + diphosphate + H(+). In terms of biological role, catalyzes the attachment of tryptophan to tRNA(Trp). This Parasynechococcus marenigrum (strain WH8102) protein is Tryptophan--tRNA ligase.